A 97-amino-acid chain; its full sequence is YcgL domain-containing protein PST_1364 (97 aa).

One can recognise a YcgL domain in the interval 3–87 (LICSIYKSPR…AEDEYIEHLP (85 aa)).

The protein is YcgL domain-containing protein PST_1364 of Stutzerimonas stutzeri (strain A1501) (Pseudomonas stutzeri).